The chain runs to 295 residues: MNVTPLDELQWKSPEWIQVFGLRTENVLDYFAESPFFDKTSNNQVIKMQRQFSQLNDPNAAVNMTQNIMTLPDGKNGNLEEEFAYVDPARRQILFKYPMYMQLEEELMKLDGTEYVLSSVREPDFWVIRKQRRTNNSGVGSAKGPEIIPLQDYYIIGANIYQSPTIFKIVQSRLMSTSYHLNSTLESLYDLIEFQPSQGVHYKVPTDTSTTATAATNGNNAGGGSNKSSVRPTGGANMATVPSTTNVNMTVNTMGTGGQTIDNGTGRTGNGNMGITTEMLDKLMVTSIRSTPNYI.

The disordered stretch occupies residues 211–243 (TATAATNGNNAGGGSNKSSVRPTGGANMATVPS). S225 bears the Phosphoserine mark.

The protein belongs to the Mediator complex subunit 6 family. In terms of assembly, component of the Mediator complex, which is composed of at least 21 subunits that form three structurally distinct submodules. The Mediator head module contains MED6, MED8, MED11, SRB4/MED17, SRB5/MED18, ROX3/MED19, SRB2/MED20 and SRB6/MED22, the middle module contains MED1, MED4, NUT1/MED5, MED7, CSE2/MED9, NUT2/MED10, SRB7/MED21 and SOH1/MED31, and the tail module contains MED2, PGD1/MED3, RGR1/MED14, GAL11/MED15 and SIN4/MED16. The head and the middle modules interact directly with RNA polymerase II, whereas the elongated tail module interacts with gene-specific regulatory proteins. MED6 interacts directly with SRB4/MED17 and SRB7/MED21.

It localises to the nucleus. Component of the Mediator complex, a coactivator involved in the regulated transcription of nearly all RNA polymerase II-dependent genes. Mediator functions as a bridge to convey information from gene-specific regulatory proteins to the basal RNA polymerase II transcription machinery. The Mediator complex, having a compact conformation in its free form, is recruited to promoters by direct interactions with regulatory proteins and serves for the assembly of a functional preinitiation complex with RNA polymerase II and the general transcription factors. The Mediator complex unfolds to an extended conformation and partially surrounds RNA polymerase II, specifically interacting with the unphosphorylated form of the C-terminal domain (CTD) of RNA polymerase II. The Mediator complex dissociates from the RNA polymerase II holoenzyme and stays at the promoter when transcriptional elongation begins. In Saccharomyces cerevisiae (strain ATCC 204508 / S288c) (Baker's yeast), this protein is Mediator of RNA polymerase II transcription subunit 6 (MED6).